An 806-amino-acid polypeptide reads, in one-letter code: DNA topoisomerase 1 (806 aa).

Over residues Met1–Ser15 the composition is skewed to low complexity. The disordered stretch occupies residues Met1–Lys236. The segment covering Asp24–Pro34 has biased composition (basic and acidic residues). 2 stretches are compositionally biased toward basic residues: residues Arg49–Lys60 and Glu98–Lys108. Positions Ser113–Glu127 are enriched in acidic residues. The span at Glu128–Asp137 shows a compositional bias: basic and acidic residues. Residues Asp138–Glu153 show a composition bias toward acidic residues. A compositionally biased stretch (basic residues) spans Glu159–Lys176. The segment covering Lys177 to Glu188 has biased composition (basic and acidic residues). The segment covering Glu189–Asp199 has biased composition (acidic residues). A compositionally biased stretch (basic and acidic residues) spans Lys210–Glu229. Interaction with DNA stretches follow at residues Lys467–Tyr468, Arg530–Lys535, and Thr634–Lys636. Positions Ser474–Glu803 constitute a Topo IB-type catalytic domain. Catalysis depends on Tyr761, which acts as the O-(3'-phospho-DNA)-tyrosine intermediate.

This sequence belongs to the type IB topoisomerase family. Expressed in male germ cells and in mature sperm.

It is found in the nucleus. It localises to the nucleolus. The protein resides in the chromosome. The catalysed reaction is ATP-independent breakage of single-stranded DNA, followed by passage and rejoining.. Functionally, releases the supercoiling and torsional tension of DNA introduced during the DNA replication and transcription by transiently cleaving and rejoining one strand of the DNA duplex. Introduces a single-strand break via transesterification at a target site in duplex DNA. The scissile phosphodiester is attacked by the catalytic tyrosine of the enzyme, resulting in the formation of a DNA-(3'-phosphotyrosyl)-enzyme intermediate and the expulsion of a 5'-OH DNA strand. The free DNA strand then rotates around the intact phosphodiester bond on the opposing strand, thus removing DNA supercoils. Finally, in the religation step, the DNA 5'-OH attacks the covalent intermediate to expel the active-site tyrosine and restore the DNA phosphodiester backbone. Required for normal spermatogenesis and oogenesis. The sequence is that of DNA topoisomerase 1 (top-1) from Caenorhabditis elegans.